The chain runs to 527 residues: Ribonuclease Y 2 (527 aa).

Residues 2-22 form a helical membrane-spanning segment; that stretch reads IAMIATAIIGIVAGGGLGWAL. Positions 339–432 constitute an HD domain; sequence QYFHCGEVGW…VIAADAVSGA (94 aa).

This sequence belongs to the RNase Y family.

Its subcellular location is the cell membrane. Functionally, endoribonuclease that initiates mRNA decay. The protein is Ribonuclease Y 2 of Bdellovibrio bacteriovorus (strain ATCC 15356 / DSM 50701 / NCIMB 9529 / HD100).